We begin with the raw amino-acid sequence, 851 residues long: B-box type zinc finger protein ncl-1 (851 aa).

The disordered stretch occupies residues 71 to 91 (GFGFGSPSSTTSSSPPLSNSP). The segment covering 76–91 (SPSSTTSSSPPLSNSP) has biased composition (low complexity). The segment at 127–174 (VPAVHCSGCKSNETATSFCQDCNANLCDNCTMAHKFMHCFADHRVVSL) adopts a B box-type 1; atypical zinc-finger fold. Zn(2+) contacts are provided by Cys-132, Cys-135, Cys-156, and His-160. Positions 176–197 (TPGTGSSSSSTSSSSSASSTSS) are enriched in low complexity. Residues 176–211 (TPGTGSSSSSTSSSSSASSTSSHQVPSLGGKQSPDS) are disordered. The B box-type 2 zinc-finger motif lies at 218–261 (KRSVLCLQHRASELVFFCVSCNLAICRDCTVSDHPSGTHQYELI). Zn(2+) contacts are provided by Cys-223, His-226, Cys-246, and His-251. Residues 303 to 331 (SLHNAHAQLEETVSNLINVIQDQKKTLAK) are a coiled coil. NHL repeat units follow at residues 573–616 (HCKF…FDKE), 620–665 (KFQF…YNQY), 666–707 (GQFL…FDMF), 708–750 (GNIL…FSYE), and 751–794 (GQYL…FSQD).

In terms of tissue distribution, present in cells in which nucleoli are absent, and absent from large cells in which nucleoli are prominent. Highly expressed in the gonads.

It localises to the cytoplasm. In terms of biological role, translational repressor that inhibits protein synthesis. Represses the translation of mRNAs such as fib-1, probably by being recruited by RNA-binding protein nos-2 and the Pumilio proteins puf-5, puf-8 and puf-9 to the consensus core PUF binding motif in the 3'-UTR of fib-1 mRNA. Negatively regulates ribosomal RNA (rRNA) synthesis, ribosomal protein synthesis and nucleolus size. Its role in the negative regulation of nucleolus size is most likely through its negative regulation of the translation of proteins such as the rRNA 2'-O-methyltransferase fib-1, and dao-5. Might act directly as a transcription factor to inhibit RNA polymerase I (rRNA) and III (5S RNA) transcription. Plays a role in embryonic development, and in particular, is involved in regulating the localization of proteins, such as par-2, that are required for embryonic cell polarity. Plays a role in the regulation of lifespan, and the response to nutrient availability. In Caenorhabditis elegans, this protein is B-box type zinc finger protein ncl-1.